The primary structure comprises 166 residues: Protein-export protein SecB (166 aa).

This sequence belongs to the SecB family. As to quaternary structure, homotetramer, a dimer of dimers. One homotetramer interacts with 1 SecA dimer.

The protein resides in the cytoplasm. Functionally, one of the proteins required for the normal export of preproteins out of the cell cytoplasm. It is a molecular chaperone that binds to a subset of precursor proteins, maintaining them in a translocation-competent state. It also specifically binds to its receptor SecA. In Actinobacillus succinogenes (strain ATCC 55618 / DSM 22257 / CCUG 43843 / 130Z), this protein is Protein-export protein SecB.